The chain runs to 800 residues: Putative antiporter subunit mnhA2 (800 aa).

21 consecutive transmembrane segments (helical) span residues 1–21 (MSLV…LFTL), 29–49 (VAGY…IMKI), 78–98 (GLSL…FFYA), 109–129 (LPRF…IVIA), 133–153 (ILMY…ISYW), 167–187 (FMIT…LYII), 209–229 (FIPM…QFPF), 241–261 (TPVS…FLLF), 272–292 (VYIY…SLTA), 300–320 (GILA…VGLG), 336–356 (ILVL…KCAL), 387–407 (IVML…GFLS), 424–444 (YGFV…ILTF), 472–492 (PWLF…IFFV), 528–548 (VNLP…LALV), 595–615 (IMIT…TVGF), 627–647 (GPLE…LIFI), 651–671 (LTMV…FIAM), 676–696 (LALT…VSFS), 712–732 (TFKI…IFVA), and 768–788 (LDTM…YTLL).

It belongs to the CPA3 antiporters (TC 2.A.63) subunit A family. As to quaternary structure, may form a heterooligomeric complex that consists of seven subunits: mnhA2, mnhB2, mnhC2, mnhD2, mnhE2, mnhF2 and mnhG2.

The protein resides in the cell membrane. The sequence is that of Putative antiporter subunit mnhA2 (mnhA2) from Staphylococcus epidermidis (strain ATCC 12228 / FDA PCI 1200).